The chain runs to 274 residues: Large ribosomal subunit protein uL2cz/uL2cy (274 aa).

Residues 225 to 274 are disordered; it reads NPVDHPHGGGEGRAPIGRKKPTTPWGYPALGRRSRKRKKYSDSFILRRRK.

The protein belongs to the universal ribosomal protein uL2 family. As to quaternary structure, part of the 50S ribosomal subunit.

It localises to the plastid. It is found in the chloroplast. The chain is Large ribosomal subunit protein uL2cz/uL2cy (rpl2-A) from Dioscorea elephantipes (Elephant's foot yam).